The primary structure comprises 397 residues: Elongation factor Tu (397 aa).

The region spanning 10 to 206 is the tr-type G domain; sequence KPHVNIGTIG…AVDDNVPEPE (197 aa). Residues 19–26 form a G1 region; sequence GHVDHGKT. 19–26 provides a ligand contact to GTP; sequence GHVDHGKT. T26 lines the Mg(2+) pocket. The G2 stretch occupies residues 62–66; sequence GITIN. The interval 83-86 is G3; the sequence is DAPG. GTP contacts are provided by residues 83 to 87 and 138 to 141; these read DAPGH and NKSD. The tract at residues 138-141 is G4; the sequence is NKSD. Positions 176 to 178 are G5; sequence SAL.

This sequence belongs to the TRAFAC class translation factor GTPase superfamily. Classic translation factor GTPase family. EF-Tu/EF-1A subfamily. In terms of assembly, monomer.

It is found in the cytoplasm. The catalysed reaction is GTP + H2O = GDP + phosphate + H(+). In terms of biological role, GTP hydrolase that promotes the GTP-dependent binding of aminoacyl-tRNA to the A-site of ribosomes during protein biosynthesis. This Brevibacterium linens protein is Elongation factor Tu.